The chain runs to 625 residues: Pentatricopeptide repeat-containing protein At2g36980, mitochondrial (625 aa).

The N-terminal 7 residues, 1-7 (MSVLVRL), are a transit peptide targeting the mitochondrion. 15 PPR repeats span residues 3 to 33 (VLVR…MPEL), 34 to 68 (DTVA…DAKP), 69 to 103 (DDYS…GFCA), 104 to 134 (SLPV…MCCD), 137 to 167 (NEVT…MPKR), 168 to 202 (VAFA…EFKP), 203 to 238 (DCYT…GWSS), 239 to 269 (AVEA…IEVL), 270 to 300 (TQVS…APEK), 301 to 335 (NIVT…GVDS), 336 to 370 (DHFA…GFQG), 371 to 401 (YAYV…IANK), 402 to 436 (DLVS…GIKP), 437 to 471 (DNVT…YRIP), and 473 to 503 (EVDH…YSSL). The type E motif stretch occupies residues 512-587 (SWETLLGACS…TPGCSWIEVG (76 aa)). A type E(+) motif region spans residues 588–618 (NQVSTFVVGDSSHPRLEELSETLNCLQHEMR).

The protein belongs to the PPR family. PCMP-E subfamily.

It localises to the mitochondrion. The chain is Pentatricopeptide repeat-containing protein At2g36980, mitochondrial (PCMP-E73) from Arabidopsis thaliana (Mouse-ear cress).